The primary structure comprises 114 residues: Iron-sulfur cluster insertion protein ErpA (114 aa).

Iron-sulfur cluster is bound by residues C42, C106, and C108.

The protein belongs to the HesB/IscA family. Homodimer. Requires iron-sulfur cluster as cofactor.

Functionally, required for insertion of 4Fe-4S clusters for at least IspG. The polypeptide is Iron-sulfur cluster insertion protein ErpA (Sodalis glossinidius (strain morsitans)).